The following is a 70-amino-acid chain: Movement protein TGBp3 (70 aa).

Residues 1–6 (MEANTY) lie on the Lumenal side of the membrane. Residues 7 to 27 (LNAIILVLVVTIIAVISTSLV) traverse the membrane as a helical segment. The Cytoplasmic segment spans residues 28–70 (RTEPCVIKITGESITVLACKLDAETIRAIADLKPLSVERLSFH).

Belongs to the Tymovirales TGBp3 protein family.

The protein resides in the host endoplasmic reticulum membrane. Plays a role in viral cell-to-cell propagation, by facilitating genome transport to neighboring plant cells through plasmosdesmata. May induce the formation of granular vesicles derived from the Endoplasmic reticulum, which align on actin filaments. The sequence is that of Movement protein TGBp3 from Potato virus X (PVX).